The primary structure comprises 587 residues: Phosphomethylpyrimidine synthase (587 aa).

Residues N218, M247, Y276, H312, 332–334, 373–376, and E412 each bind substrate; these read SRG and DGLR. Residue H416 participates in Zn(2+) binding. Residue Y439 coordinates substrate. H480 contacts Zn(2+). Residues C560, C563, and C568 each coordinate [4Fe-4S] cluster.

It belongs to the ThiC family. [4Fe-4S] cluster is required as a cofactor.

It carries out the reaction 5-amino-1-(5-phospho-beta-D-ribosyl)imidazole + S-adenosyl-L-methionine = 4-amino-2-methyl-5-(phosphooxymethyl)pyrimidine + CO + 5'-deoxyadenosine + formate + L-methionine + 3 H(+). The protein operates within cofactor biosynthesis; thiamine diphosphate biosynthesis. Its function is as follows. Catalyzes the synthesis of the hydroxymethylpyrimidine phosphate (HMP-P) moiety of thiamine from aminoimidazole ribotide (AIR) in a radical S-adenosyl-L-methionine (SAM)-dependent reaction. The chain is Phosphomethylpyrimidine synthase from Porphyromonas gingivalis (strain ATCC BAA-308 / W83).